A 509-amino-acid polypeptide reads, in one-letter code: Heat shock 70 kDa protein 14 (509 aa).

The protein belongs to the heat shock protein 70 family. In terms of assembly, component of ribosome-associated complex (RAC), a heterodimer composed of Hsp70/DnaK-type chaperone HSPA14 and Hsp40/DnaJ-type chaperone DNAJC2.

Its subcellular location is the cytoplasm. It is found in the cytosol. In terms of biological role, component of the ribosome-associated complex (RAC), a complex involved in folding or maintaining nascent polypeptides in a folding-competent state. In the RAC complex, binds to the nascent polypeptide chain, while DNAJC2 stimulates its ATPase activity. This Homo sapiens (Human) protein is Heat shock 70 kDa protein 14 (HSPA14).